Consider the following 468-residue polypeptide: Cytochrome bd ubiquinol oxidase subunit 1 (468 aa).

9 helical membrane-spanning segments follow: residues 15-35, 51-71, 95-115, 124-144, 177-197, 219-239, 331-351, 366-386, and 416-436; these read TLFHFLFVPMSIGLVFMVALM, AKFWGHLFLINFAVGVVTGIL, LAIEALLAFFMESIFIGLWIF, IHALCIWLVSFGTIMSSFWIL, LWVEFPHVIFGALATGAFFIA, LAMIVGLCAGLGVGLSGHMQA, FRIMVGAGVVMILAALGGLWL, IMIALISFPFLANSAGWIMTE, and SIIAFGVMYMILGALLVFLFI. H18 contributes to the heme b binding site. Heme b is bound at residue H183. M334 lines the heme b pocket. A disordered region spans residues 448 to 468; the sequence is HHDVPVSTDPFSQEVYHGISS.

The protein belongs to the cytochrome ubiquinol oxidase subunit 1 family. As to quaternary structure, heterodimer of subunits I and II. The cofactor is heme b. Heme d cis-diol serves as cofactor.

The protein localises to the cell membrane. It catalyses the reaction 2 a ubiquinol + O2(in) + 4 H(+)(in) = 2 a ubiquinone + 2 H2O(in) + 4 H(+)(out). In Bacillus subtilis (strain 168), this protein is Cytochrome bd ubiquinol oxidase subunit 1 (cydA).